The chain runs to 767 residues: Protein transport protein Sec23A (767 aa).

4 residues coordinate Zn(2+): C61, C66, C85, and C88. A Gelsolin-like repeat occupies 634 to 720; the sequence is PEPVLLDSSS…EHGGSQARFL (87 aa).

This sequence belongs to the SEC23/SEC24 family. SEC23 subfamily. COPII is composed of at least five proteins: the Sec23/24 complex, the Sec13/31 complex and Sar1.

Its subcellular location is the cytoplasmic vesicle. It localises to the COPII-coated vesicle membrane. The protein localises to the endoplasmic reticulum membrane. The protein resides in the cytoplasm. It is found in the cytosol. Component of the coat protein complex II (COPII) which promotes the formation of transport vesicles from the endoplasmic reticulum (ER). The coat has two main functions, the physical deformation of the endoplasmic reticulum membrane into vesicles and the selection of cargo molecules for their transport to the Golgi complex. The polypeptide is Protein transport protein Sec23A (Gallus gallus (Chicken)).